Here is a 642-residue protein sequence, read N- to C-terminus: Threonine--tRNA ligase (642 aa).

In terms of domain architecture, TGS spans 1–61; the sequence is MPVITLPDGS…HEDASLSIIT (61 aa). Residues 243–534 are catalytic; that stretch reads DHRKIGKQLD…LIEEYAGRFP (292 aa). Zn(2+) contacts are provided by Cys334, His385, and His511.

The protein belongs to the class-II aminoacyl-tRNA synthetase family. As to quaternary structure, homodimer. Zn(2+) serves as cofactor.

It localises to the cytoplasm. The enzyme catalyses tRNA(Thr) + L-threonine + ATP = L-threonyl-tRNA(Thr) + AMP + diphosphate + H(+). Catalyzes the attachment of threonine to tRNA(Thr) in a two-step reaction: L-threonine is first activated by ATP to form Thr-AMP and then transferred to the acceptor end of tRNA(Thr). Also edits incorrectly charged L-seryl-tRNA(Thr). This Shewanella amazonensis (strain ATCC BAA-1098 / SB2B) protein is Threonine--tRNA ligase.